The following is a 131-amino-acid chain: Small ribosomal subunit protein uS11 (131 aa).

It belongs to the universal ribosomal protein uS11 family. In terms of assembly, part of the 30S ribosomal subunit. Interacts with proteins S7 and S18. Binds to IF-3.

In terms of biological role, located on the platform of the 30S subunit, it bridges several disparate RNA helices of the 16S rRNA. Forms part of the Shine-Dalgarno cleft in the 70S ribosome. The protein is Small ribosomal subunit protein uS11 of Geobacter metallireducens (strain ATCC 53774 / DSM 7210 / GS-15).